Consider the following 212-residue polypeptide: 3-isopropylmalate dehydratase small subunit 1 (212 aa).

It belongs to the LeuD family. LeuD type 1 subfamily. In terms of assembly, heterodimer of LeuC and LeuD.

The enzyme catalyses (2R,3S)-3-isopropylmalate = (2S)-2-isopropylmalate. Its pathway is amino-acid biosynthesis; L-leucine biosynthesis; L-leucine from 3-methyl-2-oxobutanoate: step 2/4. Functionally, catalyzes the isomerization between 2-isopropylmalate and 3-isopropylmalate, via the formation of 2-isopropylmaleate. This chain is 3-isopropylmalate dehydratase small subunit 1, found in Chromobacterium violaceum (strain ATCC 12472 / DSM 30191 / JCM 1249 / CCUG 213 / NBRC 12614 / NCIMB 9131 / NCTC 9757 / MK).